Reading from the N-terminus, the 83-residue chain is Arminin 3b (83 aa).

Positions 1 to 18 (MKIVFAILFLTFIALTYA) are cleaved as a signal peptide. A propeptide spanning residues 19-57 (RSFEDLKEEIKNEIEKEIFDDLEEESDELDNNVKKFNDA) is cleaved from the precursor. Ser80 carries the serine amide modification.

This sequence belongs to the arminin family. As to expression, expressed in entodermal epithelium along the body column.

The protein localises to the secreted. Its subcellular location is the target cell membrane. Antimicrobial peptide with a broad-spectrum antimicrobial activity. Keeps its antibacterial activity under a wide range of salt concentrations that mimic physiological conditions of human blood, which is surprising, since Hydra is an obligate freshwater animal with nearly no salt tolerance. Does not affect red blood cells. The sequence is that of Arminin 3b from Hydra vulgaris (Hydra).